Here is a 341-residue protein sequence, read N- to C-terminus: L-threonine 3-dehydrogenase (341 aa).

Cys-38 is a Zn(2+) binding site. Active-site charge relay system residues include Thr-40 and His-43. Zn(2+)-binding residues include His-63, Glu-64, Cys-93, Cys-96, Cys-99, and Cys-107. Residues Ile-175, Asp-195, Arg-200, 262–264 (LGI), and 286–287 (IY) contribute to the NAD(+) site.

This sequence belongs to the zinc-containing alcohol dehydrogenase family. As to quaternary structure, homotetramer. Requires Zn(2+) as cofactor.

It localises to the cytoplasm. It carries out the reaction L-threonine + NAD(+) = (2S)-2-amino-3-oxobutanoate + NADH + H(+). It functions in the pathway amino-acid degradation; L-threonine degradation via oxydo-reductase pathway; glycine from L-threonine: step 1/2. Its function is as follows. Catalyzes the NAD(+)-dependent oxidation of L-threonine to 2-amino-3-ketobutyrate. In Colwellia psychrerythraea (strain 34H / ATCC BAA-681) (Vibrio psychroerythus), this protein is L-threonine 3-dehydrogenase.